We begin with the raw amino-acid sequence, 122 residues long: Prefoldin subunit 1 (122 aa).

Residue Ala2 is modified to N-acetylalanine.

Belongs to the prefoldin subunit beta family. In terms of assembly, heterohexamer of two PFD-alpha type and four PFD-beta type subunits.

Binds specifically to cytosolic chaperonin (c-CPN) and transfers target proteins to it. Binds to nascent polypeptide chain and promotes folding in an environment in which there are many competing pathways for nonnative proteins. This Bos taurus (Bovine) protein is Prefoldin subunit 1 (PFDN1).